Reading from the N-terminus, the 217-residue chain is Probable GTP-binding protein EngB (217 aa).

One can recognise an EngB-type G domain in the interval 33–217; the sequence is GPAEIAFAGR…RITIEQAVAR (185 aa). GTP-binding positions include 41 to 48, 68 to 72, 95 to 98, 162 to 165, and 196 to 198; these read GRSNVGKS, GRTQE, DMPG, TKTD, and TSS. Serine 48 and threonine 70 together coordinate Mg(2+).

The protein belongs to the TRAFAC class TrmE-Era-EngA-EngB-Septin-like GTPase superfamily. EngB GTPase family. The cofactor is Mg(2+).

Its function is as follows. Necessary for normal cell division and for the maintenance of normal septation. The sequence is that of Probable GTP-binding protein EngB from Sinorhizobium fredii (strain NBRC 101917 / NGR234).